The following is a 162-amino-acid chain: UPF0114 protein PSPA7_5214 (162 aa).

The next 3 helical transmembrane spans lie at 15–35 (LLAP…IKFF), 53–73 (LILV…LVMV), and 136–156 (LMWY…MGYL).

Belongs to the UPF0114 family.

The protein localises to the cell membrane. The protein is UPF0114 protein PSPA7_5214 of Pseudomonas paraeruginosa (strain DSM 24068 / PA7) (Pseudomonas aeruginosa (strain PA7)).